Consider the following 512-residue polypeptide: Histidine ammonia-lyase (512 aa).

The segment at residues 143–145 is a cross-link (5-imidazolinone (Cys-Gly)); sequence CSG. Serine 144 bears the 2,3-didehydroalanine (Ser) mark.

This sequence belongs to the PAL/histidase family. In terms of processing, contains an active site 4-methylidene-imidazol-5-one (MIO), which is formed autocatalytically by cyclization and dehydration of residues Cys-Ser-Gly.

It localises to the cytoplasm. The enzyme catalyses L-histidine = trans-urocanate + NH4(+). It participates in amino-acid degradation; L-histidine degradation into L-glutamate; N-formimidoyl-L-glutamate from L-histidine: step 1/3. In Streptomyces avermitilis (strain ATCC 31267 / DSM 46492 / JCM 5070 / NBRC 14893 / NCIMB 12804 / NRRL 8165 / MA-4680), this protein is Histidine ammonia-lyase.